The chain runs to 376 residues: Chaperone protein DnaJ (376 aa).

The 66-residue stretch at 5-70 folds into the J domain; it reads DYYEVLGVGR…DKKAAYDQFG (66 aa). The CR-type zinc-finger motif lies at 132–210; that stretch reads GLTKELRIPT…CHGEGRVEKS (79 aa). Cysteine 145, cysteine 148, cysteine 162, cysteine 165, cysteine 184, cysteine 187, cysteine 198, and cysteine 201 together coordinate Zn(2+). 4 CXXCXGXG motif repeats span residues 145-152, 162-169, 184-191, and 198-205; these read CDSCDGSG, CGTCHGQG, CPTCHGRG, and CNKCHGEG.

Belongs to the DnaJ family. Homodimer. The cofactor is Zn(2+).

Its subcellular location is the cytoplasm. Its function is as follows. Participates actively in the response to hyperosmotic and heat shock by preventing the aggregation of stress-denatured proteins and by disaggregating proteins, also in an autonomous, DnaK-independent fashion. Unfolded proteins bind initially to DnaJ; upon interaction with the DnaJ-bound protein, DnaK hydrolyzes its bound ATP, resulting in the formation of a stable complex. GrpE releases ADP from DnaK; ATP binding to DnaK triggers the release of the substrate protein, thus completing the reaction cycle. Several rounds of ATP-dependent interactions between DnaJ, DnaK and GrpE are required for fully efficient folding. Also involved, together with DnaK and GrpE, in the DNA replication of plasmids through activation of initiation proteins. This is Chaperone protein DnaJ from Shewanella pealeana (strain ATCC 700345 / ANG-SQ1).